A 232-amino-acid polypeptide reads, in one-letter code: 2,3-bisphosphoglycerate-dependent phosphoglycerate mutase (232 aa).

Substrate is bound by residues 10–17, 23–24, arginine 62, 89–92, lysine 100, 116–117, and 185–186; these read RHGESQWN, TG, ERHY, RR, and GN. Histidine 11 serves as the catalytic Tele-phosphohistidine intermediate. Residue glutamate 89 is the Proton donor/acceptor of the active site.

It belongs to the phosphoglycerate mutase family. BPG-dependent PGAM subfamily. In terms of assembly, homodimer.

It catalyses the reaction (2R)-2-phosphoglycerate = (2R)-3-phosphoglycerate. It participates in carbohydrate degradation; glycolysis; pyruvate from D-glyceraldehyde 3-phosphate: step 3/5. In terms of biological role, catalyzes the interconversion of 2-phosphoglycerate and 3-phosphoglycerate. This is 2,3-bisphosphoglycerate-dependent phosphoglycerate mutase from Blochmanniella floridana.